Reading from the N-terminus, the 182-residue chain is Adenine phosphoribosyltransferase (182 aa).

This sequence belongs to the purine/pyrimidine phosphoribosyltransferase family. Homodimer.

The protein resides in the cytoplasm. It carries out the reaction AMP + diphosphate = 5-phospho-alpha-D-ribose 1-diphosphate + adenine. It functions in the pathway purine metabolism; AMP biosynthesis via salvage pathway; AMP from adenine: step 1/1. In terms of biological role, catalyzes a salvage reaction resulting in the formation of AMP, that is energically less costly than de novo synthesis. In Stutzerimonas stutzeri (Pseudomonas stutzeri), this protein is Adenine phosphoribosyltransferase.